The following is a 539-amino-acid chain: E3 ubiquitin-protein ligase arc-1 (539 aa).

The RING-type zinc-finger motif lies at 6–53; the sequence is CNVCNEEYSARDPLKCPRVLTGCGHTICHNCAISIAGRNSSIFCPFDR. The B box-type zinc finger occupies 103-149; the sequence is LLNLECDEDSEHVAVIYCTVCDSNLCERCSESTHSTNVLSKHRRIPL. An ARF-like region spans residues 369–539; it reads ESRVVLLGLD…LSRLNGTCPV (171 aa). GTP contacts are provided by residues 376-383, 422-426, and 481-484; these read GLDGAGKT, DVGGL, and NRKD.

The protein in the C-terminal section; belongs to the small GTPase superfamily. Arf family.

The enzyme catalyses S-ubiquitinyl-[E2 ubiquitin-conjugating enzyme]-L-cysteine + [acceptor protein]-L-lysine = [E2 ubiquitin-conjugating enzyme]-L-cysteine + N(6)-ubiquitinyl-[acceptor protein]-L-lysine.. The protein operates within protein modification; protein ubiquitination. Acts as an E3 ubiquitin-protein ligase. This chain is E3 ubiquitin-protein ligase arc-1 (arc-1), found in Caenorhabditis elegans.